We begin with the raw amino-acid sequence, 132 residues long: Small ribosomal subunit protein uS8 (132 aa).

This sequence belongs to the universal ribosomal protein uS8 family. Part of the 30S ribosomal subunit. Contacts proteins S5 and S12.

Functionally, one of the primary rRNA binding proteins, it binds directly to 16S rRNA central domain where it helps coordinate assembly of the platform of the 30S subunit. In Heliobacterium modesticaldum (strain ATCC 51547 / Ice1), this protein is Small ribosomal subunit protein uS8.